Here is a 431-residue protein sequence, read N- to C-terminus: Homogentisate 1,2-dioxygenase (431 aa).

The active-site Proton acceptor is the H286. The Fe cation site is built by H329 and E335. Residues Y344 and H365 each coordinate homogentisate. H365 contributes to the Fe cation binding site.

This sequence belongs to the homogentisate dioxygenase family. As to quaternary structure, hexamer; dimer of trimers. It depends on Fe cation as a cofactor.

The catalysed reaction is homogentisate + O2 = 4-maleylacetoacetate + H(+). It functions in the pathway amino-acid degradation; L-phenylalanine degradation; acetoacetate and fumarate from L-phenylalanine: step 4/6. Functionally, involved in the catabolism of homogentisate (2,5-dihydroxyphenylacetate or 2,5-OH-PhAc), a central intermediate in the degradation of phenylalanine and tyrosine. Catalyzes the oxidative ring cleavage of the aromatic ring of homogentisate to yield maleylacetoacetate. This chain is Homogentisate 1,2-dioxygenase, found in Pseudomonas fluorescens (strain Pf0-1).